The chain runs to 283 residues: MTKLITTVKEMQHIVKAAKRSGTTIGFIPTMGALHDGHLTMVRESVSTNDITVVSVFVNPLQFGPNEDFDAYPRQIDKDLELVSEVGADIVFHPAVEDIYPGELGIDVKVGPLADVLEGAKRPGHFDGVVTVVNKLFNIVMPDYAYFGKKDAQQLAIVEQMVKDFNHAVEIIGIDIVREADGLAKSSRNVYLTEQERQEAVHLSKSLLLAQALYQDGERQSKVIIDRVTEYLESHISGRIEEVAVYSYPQLVEQHEITGRIFISLAVKFSKARLIDNIIIGAE.

Residue 31–38 (MGALHDGH) coordinates ATP. The active-site Proton donor is the His-38. Gln-62 provides a ligand contact to (R)-pantoate. Position 62 (Gln-62) interacts with beta-alanine. 148 to 151 (GKKD) lines the ATP pocket. (R)-pantoate is bound at residue Gln-154. ATP is bound by residues Val-177 and 185-188 (KSSR).

It belongs to the pantothenate synthetase family. In terms of assembly, homodimer.

Its subcellular location is the cytoplasm. The enzyme catalyses (R)-pantoate + beta-alanine + ATP = (R)-pantothenate + AMP + diphosphate + H(+). Its pathway is cofactor biosynthesis; (R)-pantothenate biosynthesis; (R)-pantothenate from (R)-pantoate and beta-alanine: step 1/1. Catalyzes the condensation of pantoate with beta-alanine in an ATP-dependent reaction via a pantoyl-adenylate intermediate. In Staphylococcus aureus (strain Mu3 / ATCC 700698), this protein is Pantothenate synthetase.